A 69-amino-acid polypeptide reads, in one-letter code: DNA gyrase inhibitor YacG (69 aa).

Residues Cys7, Cys10, Cys26, and Cys30 each coordinate Zn(2+).

The protein belongs to the DNA gyrase inhibitor YacG family. In terms of assembly, interacts with GyrB. It depends on Zn(2+) as a cofactor.

Functionally, inhibits all the catalytic activities of DNA gyrase by preventing its interaction with DNA. Acts by binding directly to the C-terminal domain of GyrB, which probably disrupts DNA binding by the gyrase. This is DNA gyrase inhibitor YacG from Shewanella sp. (strain W3-18-1).